A 311-amino-acid polypeptide reads, in one-letter code: Methionyl-tRNA formyltransferase (311 aa).

110–113 (SLLP) is a binding site for (6S)-5,6,7,8-tetrahydrofolate.

Belongs to the Fmt family.

It catalyses the reaction L-methionyl-tRNA(fMet) + (6R)-10-formyltetrahydrofolate = N-formyl-L-methionyl-tRNA(fMet) + (6S)-5,6,7,8-tetrahydrofolate + H(+). Functionally, attaches a formyl group to the free amino group of methionyl-tRNA(fMet). The formyl group appears to play a dual role in the initiator identity of N-formylmethionyl-tRNA by promoting its recognition by IF2 and preventing the misappropriation of this tRNA by the elongation apparatus. This chain is Methionyl-tRNA formyltransferase, found in Streptococcus gordonii (strain Challis / ATCC 35105 / BCRC 15272 / CH1 / DL1 / V288).